A 514-amino-acid polypeptide reads, in one-letter code: 2,3-bisphosphoglycerate-independent phosphoglycerate mutase (514 aa).

Positions 14 and 64 each coordinate Mn(2+). S64 serves as the catalytic Phosphoserine intermediate. Residues H125, 155–156, R187, R193, 263–266, and K336 contribute to the substrate site; these read RD and RADR. Mn(2+)-binding residues include D403, H407, D444, H445, and H463.

This sequence belongs to the BPG-independent phosphoglycerate mutase family. As to quaternary structure, monomer. Requires Mn(2+) as cofactor.

It catalyses the reaction (2R)-2-phosphoglycerate = (2R)-3-phosphoglycerate. It functions in the pathway carbohydrate degradation; glycolysis; pyruvate from D-glyceraldehyde 3-phosphate: step 3/5. In terms of biological role, catalyzes the interconversion of 2-phosphoglycerate and 3-phosphoglycerate. The polypeptide is 2,3-bisphosphoglycerate-independent phosphoglycerate mutase (Salmonella paratyphi A (strain ATCC 9150 / SARB42)).